The chain runs to 69 residues: Arabinogalactan protein 24 (69 aa).

Positions 1–25 (MMMMTKMFVQIAVVCLLATMAVVSA) are cleaved as a signal peptide. Residues Pro-34, Pro-36, Pro-38, and Pro-40 each carry the 4-hydroxyproline modification. Pro-34, Pro-36, Pro-38, and Pro-40 each carry an O-linked (Ara...) hydroxyproline glycan. Residue Ser-42 is the site of GPI-anchor amidated serine attachment. Positions 43–69 (SSTVVSATNMFTVLAIAAVALVVGSNH) are cleaved as a propeptide — removed in mature form.

It belongs to the AG-peptide AGP family. Contains 4-hydroxyproline; hydroxylated on Pro-34, Pro-36, Pro-38 and Pro-40. Post-translationally, O-glycosylated on hydroxyprolines; noncontiguous hydroxylproline residues are glycosylated with arabinogalactan.

Its subcellular location is the cell membrane. Its function is as follows. Proteoglycan that seems to be implicated in diverse developmental roles such as differentiation, cell-cell recognition, embryogenesis and programmed cell death. The polypeptide is Arabinogalactan protein 24 (Arabidopsis thaliana (Mouse-ear cress)).